Consider the following 179-residue polypeptide: NAD(P)H-quinone oxidoreductase subunit 6, chloroplastic (179 aa).

Helical transmembrane passes span 8–28, 30–50, 58–78, 98–118, and 150–170; these read ITLF…VFFN, IIYS…LYLL, VAQV…AIML, SFCV…TTPW, and VLPF…AVII.

It belongs to the complex I subunit 6 family. As to quaternary structure, NDH is composed of at least 16 different subunits, 5 of which are encoded in the nucleus.

Its subcellular location is the plastid. It localises to the chloroplast thylakoid membrane. The enzyme catalyses a plastoquinone + NADH + (n+1) H(+)(in) = a plastoquinol + NAD(+) + n H(+)(out). It catalyses the reaction a plastoquinone + NADPH + (n+1) H(+)(in) = a plastoquinol + NADP(+) + n H(+)(out). Functionally, NDH shuttles electrons from NAD(P)H:plastoquinone, via FMN and iron-sulfur (Fe-S) centers, to quinones in the photosynthetic chain and possibly in a chloroplast respiratory chain. The immediate electron acceptor for the enzyme in this species is believed to be plastoquinone. Couples the redox reaction to proton translocation, and thus conserves the redox energy in a proton gradient. The chain is NAD(P)H-quinone oxidoreductase subunit 6, chloroplastic (ndhG) from Chaetosphaeridium globosum (Charophycean green alga).